The sequence spans 53 residues: MPQMAPISWLLLFIIFSITFILFCSINYYSYTPNSPKSNELKNINLNSMNWKW.

Residues 4-24 form a helical membrane-spanning segment; it reads MAPISWLLLFIIFSITFILFC.

The protein belongs to the ATPase protein 8 family. In terms of assembly, F-type ATPases have 2 components, CF(1) - the catalytic core - and CF(0) - the membrane proton channel.

Its subcellular location is the mitochondrion membrane. Its function is as follows. Mitochondrial membrane ATP synthase (F(1)F(0) ATP synthase or Complex V) produces ATP from ADP in the presence of a proton gradient across the membrane which is generated by electron transport complexes of the respiratory chain. F-type ATPases consist of two structural domains, F(1) - containing the extramembraneous catalytic core and F(0) - containing the membrane proton channel, linked together by a central stalk and a peripheral stalk. During catalysis, ATP synthesis in the catalytic domain of F(1) is coupled via a rotary mechanism of the central stalk subunits to proton translocation. Part of the complex F(0) domain. Minor subunit located with subunit a in the membrane. The sequence is that of ATP synthase protein 8 (mt:ATPase8) from Drosophila sechellia (Fruit fly).